Reading from the N-terminus, the 364-residue chain is Chorismate synthase (364 aa).

Residues Arg48 and Arg54 each coordinate NADP(+). Residues 125–127 (RSS), 238–239 (NA), Gly278, 293–297 (KPTSS), and Arg319 contribute to the FMN site.

This sequence belongs to the chorismate synthase family. As to quaternary structure, homotetramer. It depends on FMNH2 as a cofactor.

The enzyme catalyses 5-O-(1-carboxyvinyl)-3-phosphoshikimate = chorismate + phosphate. It participates in metabolic intermediate biosynthesis; chorismate biosynthesis; chorismate from D-erythrose 4-phosphate and phosphoenolpyruvate: step 7/7. In terms of biological role, catalyzes the anti-1,4-elimination of the C-3 phosphate and the C-6 proR hydrogen from 5-enolpyruvylshikimate-3-phosphate (EPSP) to yield chorismate, which is the branch point compound that serves as the starting substrate for the three terminal pathways of aromatic amino acid biosynthesis. This reaction introduces a second double bond into the aromatic ring system. The polypeptide is Chorismate synthase (Shewanella loihica (strain ATCC BAA-1088 / PV-4)).